A 782-amino-acid chain; its full sequence is Host cell factor homolog hcf-1 (782 aa).

A disordered region spans residues M1–K25. Residues R14 to K25 are compositionally biased toward basic and acidic residues. Kelch repeat units follow at residues L55 to N103, I105 to H151, K161 to K222, R227 to L271, and K280 to H324. 3 positions are modified to phosphoserine: S423, S431, and S449. Polar residues predominate over residues S423–K434. The tract at residues S423 to W553 is disordered. 2 stretches are compositionally biased toward polar residues: residues T456–T469 and T496–C513. Residue S498 is modified to Phosphoserine. Positions G537–P552 are enriched in acidic residues.

Interacts with daf-16/FOXO. Interacts with deacetylase sir-2.1. Interacts with the 14-3-3 family proteins ftt-2 and par-5. Post-translationally, phosphorylated at multiple serine residues. Phosphorylation is developmentally regulated, occurring in embryos but not L1 larvae. Phosphorylation may be cell-cycle-regulated.

The protein localises to the nucleus. Functionally, transcriptional coregulator. Involved in control of the cell cycle and in modulating mitotic histone phosphorylation. Plays a role in modulating lifespan by regulating the transcriptional activity of daf-16/Forkhead box protein O, in concert with protein deacetylase sir-2.1/SIRT1, and perhaps acting independently of the Insulin/IGF-1-like signaling (IIS) mediated pathway. Negatively modulates responses to environmental stresses, including oxidative stress, heat stress, and exposure to heavy metals; acting via regulation of the transcription factors daf-16 and skn-1. May play a role in pharyngeal development via positive modulation of expression of sup-35. The protein is Host cell factor homolog hcf-1 of Caenorhabditis elegans.